A 198-amino-acid chain; its full sequence is Small ribosomal subunit protein uS5 (198 aa).

Residues 46–109 (LEDDVLEISM…NNAKLNIFKV (64 aa)) enclose the S5 DRBM domain.

The protein belongs to the universal ribosomal protein uS5 family. In terms of assembly, part of the 30S ribosomal subunit. Contacts protein S4.

Its function is as follows. With S4 and S12 plays an important role in translational accuracy. In Archaeoglobus fulgidus (strain ATCC 49558 / DSM 4304 / JCM 9628 / NBRC 100126 / VC-16), this protein is Small ribosomal subunit protein uS5.